The primary structure comprises 197 residues: Imidazoleglycerol-phosphate dehydratase (197 aa).

This sequence belongs to the imidazoleglycerol-phosphate dehydratase family.

It localises to the cytoplasm. The catalysed reaction is D-erythro-1-(imidazol-4-yl)glycerol 3-phosphate = 3-(imidazol-4-yl)-2-oxopropyl phosphate + H2O. The protein operates within amino-acid biosynthesis; L-histidine biosynthesis; L-histidine from 5-phospho-alpha-D-ribose 1-diphosphate: step 6/9. This is Imidazoleglycerol-phosphate dehydratase from Bradyrhizobium sp. (strain BTAi1 / ATCC BAA-1182).